The chain runs to 285 residues: MNDVVPPAAAESAAAGVSRIALGIEYKGSRYRGWQRQEAGVPSVQEALERALSKVAAEPVGVICAGRTDAAVHASGQVVHFDTAVERPLKAWVMGTNANLPADISVTWARVMPAHFHARFSAMARRYRYAIYNDPIRPAHLAEEVTWNHRPLDIGRMREAAQVLVGTHDFTSFRAVQCQAKSPVKTMHHVRLLEHGRLIVLDIRGNAFLHHMVRNIAGVLMTIGAGERPIEWAKEVLEARDRRAGGVTAHPYGLYLVRVEYPGEFELPERYLGPHFLSGLPDIVG.

Catalysis depends on aspartate 69, which acts as the Nucleophile. Tyrosine 127 is a binding site for substrate.

This sequence belongs to the tRNA pseudouridine synthase TruA family. In terms of assembly, homodimer.

It carries out the reaction uridine(38/39/40) in tRNA = pseudouridine(38/39/40) in tRNA. In terms of biological role, formation of pseudouridine at positions 38, 39 and 40 in the anticodon stem and loop of transfer RNAs. The sequence is that of tRNA pseudouridine synthase A from Pseudomonas aeruginosa (strain ATCC 15692 / DSM 22644 / CIP 104116 / JCM 14847 / LMG 12228 / 1C / PRS 101 / PAO1).